We begin with the raw amino-acid sequence, 428 residues long: MKKPFYKVLYVQVIFAIVVGVILGHYYPSLAVDMKPLGDGFIKLIKMVIGPIIFCTVVTGIAGMQDMKKVGRVGGKALLYFEIVSTCALVLGLAATHILRPGVGFNIDPATLNGKEVASYAAKAHGQSSVDFLMHIIPNTMIDAFAQGEILQILLIALLFGSVLAHLGERGRVVTDFIDGITRVLFGIVHIVTKLAPIGAFGAMAFTIGKYGVGSLVPLLKLIGTFYLTSVVFVLVVLGAIARFTGFSIIRFVGYIKEELLIVLGTSSSEAALPQLMEKLEKAGCSRSVVGLVVPTGYLFNLDGTNIYMTMAVLFIAQATNIELTWMQQLTLLAVAMLTSKGASGVTGAGFITLAATLAVVPTIPLSGMVLILGIDRFMSECRALTNIVGNGVATVVVSAWEKELDRAKLRAALSGNGEAAAGEAARV.

8 helical membrane passes run 8-28 (VLYV…HYYP), 44-64 (LIKM…IAGM), 78-98 (LLYF…ATHI), 148-168 (GEIL…AHLG), 184-204 (VLFG…FGAM), 222-242 (LIGT…GAIA), 307-327 (IYMT…LTWM), and 355-375 (AATL…ILGI).

The protein belongs to the dicarboxylate/amino acid:cation symporter (DAACS) (TC 2.A.23) family.

It localises to the cell inner membrane. In terms of biological role, responsible for the transport of dicarboxylates such as succinate, fumarate, and malate from the periplasm across the membrane. The polypeptide is C4-dicarboxylate transport protein (Burkholderia mallei (strain ATCC 23344)).